We begin with the raw amino-acid sequence, 183 residues long: Apo-citrate lyase phosphoribosyl-dephospho-CoA transferase (183 aa).

Belongs to the CitX family.

The catalysed reaction is apo-[citrate lyase ACP] + 2'-(5''-triphospho-alpha-D-ribosyl)-3'-dephospho-CoA = holo-[citrate lyase ACP] + diphosphate. Functionally, transfers 2-(5''-triphosphoribosyl)-3'-dephosphocoenzyme-A on a serine residue to the apo-acyl carrier protein (gamma chain) of the citrate lyase to yield holo-acyl carrier protein. The protein is Apo-citrate lyase phosphoribosyl-dephospho-CoA transferase of Citrobacter koseri (strain ATCC BAA-895 / CDC 4225-83 / SGSC4696).